A 108-amino-acid polypeptide reads, in one-letter code: Acid stress chaperone HdeB (108 aa).

The signal sequence occupies residues 1–29 (MNISSLRKAFIFMGAVAALSLVNAQSALA). Residue Lys93 is modified to N6-acetyllysine.

This sequence belongs to the HdeB family.

The protein resides in the periplasm. Its function is as follows. Required for optimal acid stress protection, which is important for survival of enteric bacteria in the acidic environment of the host stomach. Exhibits a chaperone-like activity at acidic pH by preventing the aggregation of many different periplasmic proteins. The polypeptide is Acid stress chaperone HdeB (Escherichia coli O6:H1 (strain CFT073 / ATCC 700928 / UPEC)).